Here is a 229-residue protein sequence, read N- to C-terminus: Orotidine 5'-phosphate decarboxylase (229 aa).

Residues aspartate 11, lysine 33, 61–70 (DMKLFDISAT), threonine 116, arginine 179, glutamine 188, glycine 208, and arginine 209 contribute to the substrate site. Lysine 63 serves as the catalytic Proton donor.

This sequence belongs to the OMP decarboxylase family. Type 1 subfamily. Homodimer.

The catalysed reaction is orotidine 5'-phosphate + H(+) = UMP + CO2. It participates in pyrimidine metabolism; UMP biosynthesis via de novo pathway; UMP from orotate: step 2/2. Functionally, catalyzes the decarboxylation of orotidine 5'-monophosphate (OMP) to uridine 5'-monophosphate (UMP). The chain is Orotidine 5'-phosphate decarboxylase from Jannaschia sp. (strain CCS1).